We begin with the raw amino-acid sequence, 232 residues long: MSNYRDIAWQGLWKNNPGLVQLLGLCPLLAVTATLTNAIGLGLATLVVLVGSNVLVSLVREFVPKEIRIPVFVMIIAALVTCVQLLINAYAYGLYLSLGIFLPLIVTNCVIIGRAEAFASRNSVVKAAFDGLMMGLGFTLVLMLLGACREILGQGTLFDGADLLLGDWAKGLTIHLWQVDTNFLLAMLPPGAFIAMGFLIAIKNMIDKQLEARKPALEAAPAVTRARITKVS.

6 consecutive transmembrane segments (helical) span residues 18 to 38 (GLVQ…LTNA), 39 to 59 (IGLG…VSLV), 69 to 89 (IPVF…LINA), 93 to 113 (GLYL…VIIG), 127 to 147 (AAFD…LLGA), and 182 to 202 (NFLL…LIAI).

Belongs to the NqrDE/RnfAE family. In terms of assembly, the complex is composed of six subunits: RnfA, RnfB, RnfC, RnfD, RnfE and RnfG.

It localises to the cell inner membrane. Functionally, part of a membrane-bound complex that couples electron transfer with translocation of ions across the membrane. This Shewanella loihica (strain ATCC BAA-1088 / PV-4) protein is Ion-translocating oxidoreductase complex subunit E.